The following is a 351-amino-acid chain: Anthranilate phosphoribosyltransferase (351 aa).

5-phospho-alpha-D-ribose 1-diphosphate contacts are provided by residues Gly80, 83–84 (GD), Thr88, 90–93 (NIST), 108–116 (KHGNRSVTS), and Ser120. Gly80 lines the anthranilate pocket. Ser92 is a binding site for Mg(2+). Asn111 provides a ligand contact to anthranilate. Arg166 is an anthranilate binding site. Mg(2+) is bound by residues Asp229 and Glu230.

This sequence belongs to the anthranilate phosphoribosyltransferase family. As to quaternary structure, homodimer. The cofactor is Mg(2+).

It carries out the reaction N-(5-phospho-beta-D-ribosyl)anthranilate + diphosphate = 5-phospho-alpha-D-ribose 1-diphosphate + anthranilate. It functions in the pathway amino-acid biosynthesis; L-tryptophan biosynthesis; L-tryptophan from chorismate: step 2/5. Its function is as follows. Catalyzes the transfer of the phosphoribosyl group of 5-phosphorylribose-1-pyrophosphate (PRPP) to anthranilate to yield N-(5'-phosphoribosyl)-anthranilate (PRA). In Pelodictyon phaeoclathratiforme (strain DSM 5477 / BU-1), this protein is Anthranilate phosphoribosyltransferase.